The chain runs to 223 residues: Large ribosomal subunit protein uL4 (223 aa).

Positions 47 to 72 (GTASTKTRGEVAGGGRKPWPQKHTGR) are disordered.

Belongs to the universal ribosomal protein uL4 family. Part of the 50S ribosomal subunit.

In terms of biological role, one of the primary rRNA binding proteins, this protein initially binds near the 5'-end of the 23S rRNA. It is important during the early stages of 50S assembly. It makes multiple contacts with different domains of the 23S rRNA in the assembled 50S subunit and ribosome. Its function is as follows. Forms part of the polypeptide exit tunnel. The sequence is that of Large ribosomal subunit protein uL4 from Fervidobacterium nodosum (strain ATCC 35602 / DSM 5306 / Rt17-B1).